The sequence spans 457 residues: Cysteine--tRNA ligase (457 aa).

Residue C30 participates in Zn(2+) binding. Positions 32 to 42 match the 'HIGH' region motif; sequence PTVYAPAHIGN. Zn(2+)-binding residues include C221, H246, and E250. The 'KMSKS' region motif lies at 278 to 282; that stretch reads KMSKS. ATP is bound at residue K281.

Belongs to the class-I aminoacyl-tRNA synthetase family. In terms of assembly, monomer. Zn(2+) serves as cofactor.

Its subcellular location is the cytoplasm. The catalysed reaction is tRNA(Cys) + L-cysteine + ATP = L-cysteinyl-tRNA(Cys) + AMP + diphosphate. The polypeptide is Cysteine--tRNA ligase (Opitutus terrae (strain DSM 11246 / JCM 15787 / PB90-1)).